The sequence spans 442 residues: tRNA modification GTPase MnmE (442 aa).

The (6S)-5-formyl-5,6,7,8-tetrahydrofolate site is built by arginine 27, glutamate 84, and lysine 124. The 146-residue stretch at 221–366 folds into the TrmE-type G domain; it reads GLHVVIVGAP…LLDALQAFAE (146 aa). GTP contacts are provided by residues 231–236, 250–256, and 275–278; these read NAGKSS, SEEAGTT, and DTAG. Positions 235 and 256 each coordinate Mg(2+). (6S)-5-formyl-5,6,7,8-tetrahydrofolate is bound at residue lysine 442.

This sequence belongs to the TRAFAC class TrmE-Era-EngA-EngB-Septin-like GTPase superfamily. TrmE GTPase family. Homodimer. Heterotetramer of two MnmE and two MnmG subunits. Requires K(+) as cofactor.

It is found in the cytoplasm. Its function is as follows. Exhibits a very high intrinsic GTPase hydrolysis rate. Involved in the addition of a carboxymethylaminomethyl (cmnm) group at the wobble position (U34) of certain tRNAs, forming tRNA-cmnm(5)s(2)U34. This chain is tRNA modification GTPase MnmE, found in Brucella abortus (strain 2308).